Reading from the N-terminus, the 180-residue chain is NAD(P)H-quinone oxidoreductase subunit I, chloroplastic (180 aa).

4Fe-4S ferredoxin-type domains follow at residues 55-84 (GRIH…VDWR) and 95-124 (LNYS…MTEE). [4Fe-4S] cluster is bound by residues Cys-64, Cys-67, Cys-70, Cys-74, Cys-104, Cys-107, Cys-110, and Cys-114.

Belongs to the complex I 23 kDa subunit family. As to quaternary structure, NDH is composed of at least 16 different subunits, 5 of which are encoded in the nucleus. Requires [4Fe-4S] cluster as cofactor.

Its subcellular location is the plastid. It localises to the chloroplast thylakoid membrane. The catalysed reaction is a plastoquinone + NADH + (n+1) H(+)(in) = a plastoquinol + NAD(+) + n H(+)(out). The enzyme catalyses a plastoquinone + NADPH + (n+1) H(+)(in) = a plastoquinol + NADP(+) + n H(+)(out). Functionally, NDH shuttles electrons from NAD(P)H:plastoquinone, via FMN and iron-sulfur (Fe-S) centers, to quinones in the photosynthetic chain and possibly in a chloroplast respiratory chain. The immediate electron acceptor for the enzyme in this species is believed to be plastoquinone. Couples the redox reaction to proton translocation, and thus conserves the redox energy in a proton gradient. The protein is NAD(P)H-quinone oxidoreductase subunit I, chloroplastic of Liriodendron tulipifera (Tuliptree).